Reading from the N-terminus, the 207-residue chain is Protein Nef (207 aa).

Residue Gly-2 is the site of N-myristoyl glycine; by host attachment. Ser-6 bears the Phosphoserine; by host mark. The acidic; interacts with host PACS1 and PACS2; stabilizes the interaction of NEF/MHC-I with host AP1M1; necessary for MHC-I internalization stretch occupies residues 62 to 66 (EEDSE). The interval 70-79 (PVRPQVPLRP) is SH3-binding; interaction with Src family tyrosine kinases. The short motif at 73-76 (PQVP) is the PxxP; stabilizes the interaction of NEF/MHC-I with host AP1M1; necessary for MHC-I internalization element. The mediates dimerization, Nef-PTE1 interaction stretch occupies residues 109 to 125 (EILDLWVYNTQGYFPDW). Residues 149–181 (MDPAEVEEANKGENNSLLHPICQHGMEDEDREV) are binding to ATP6V1H. The short motif at 165 to 166 (LL) is the Dileucine internalization motif; necessary for CD4 internalization element. The Diacidic; necessary for CD4 internalization motif lies at 175-176 (ED).

Belongs to the lentivirus primate group Nef protein family. As to quaternary structure, monomer; cytosolic form. Homodimer; membrane bound form. Interacts with Nef associated p21-activated kinase (PAK2); this interaction activates PAK2. Associates with the Nef-MHC-I-AP1 complex; this complex is required for MHC-I internalization. Interacts (via C-terminus) with host PI3-kinase. Interacts with host PACS1; this interaction seems to be weak. Interacts with host PACS2. Interacts with host LCK and MAPK3; these interactions inhibit the kinase activity of the latter. Interacts with host ATP6V1H; this interaction may play a role in CD4 endocytosis. Associates with the CD4-Nef-AP2 complex; this complex is required for CD4 internalization. Interacts with host AP2 subunit alpha and AP2 subunit sigma2. Interacts with TCR-zeta chain; this interaction up-regulates the Fas ligand (FasL) surface expression. Interacts with host HCK, LYN, and SRC; these interactions activate the Src family kinases. Interacts with MAP3K5; this interaction inhibits the Fas and TNFR-mediated death signals. Interacts with beta-COP and PTE1. Interacts with human RACK1; this increases Nef phosphorylation by PKC. Interacts with TP53; this interaction decreases the half-life of TP53, protecting the infected cell against p53-mediated apoptosis. In terms of processing, the virion-associated Nef proteins are cleaved by the viral protease to release the soluble C-terminal core protein. Nef is probably cleaved concomitantly with viral structural proteins on maturation of virus particles. Post-translationally, myristoylated. Phosphorylated on serine residues, probably by host PKCdelta and theta.

It is found in the host cell membrane. The protein localises to the virion. Its subcellular location is the secreted. The protein resides in the host Golgi apparatus membrane. Functionally, factor of infectivity and pathogenicity, required for optimal virus replication. Alters numerous pathways of T-lymphocyte function and down-regulates immunity surface molecules in order to evade host defense and increase viral infectivity. Alters the functionality of other immunity cells, like dendritic cells, monocytes/macrophages and NK cells. In infected CD4(+) T-lymphocytes, down-regulates the surface MHC-I, mature MHC-II, CD4, CD28, CCR5 and CXCR4 molecules. Mediates internalization and degradation of host CD4 through the interaction of with the cytoplasmic tail of CD4, the recruitment of AP-2 (clathrin adapter protein complex 2), internalization through clathrin coated pits, and subsequent transport to endosomes and lysosomes for degradation. Diverts host MHC-I molecules to the trans-Golgi network-associated endosomal compartments by an endocytic pathway to finally target them for degradation. MHC-I down-regulation may involve AP-1 (clathrin adapter protein complex 1) or possibly Src family kinase-ZAP70/Syk-PI3K cascade recruited by PACS2. In consequence infected cells are masked for immune recognition by cytotoxic T-lymphocytes. Decreasing the number of immune receptors also prevents reinfection by more HIV particles (superinfection). Down-regulates host SERINC3 and SERINC5 thereby excluding these proteins from the viral particles. Virion infectivity is drastically higher when SERINC3 or SERINC5 are excluded from the viral envelope, because these host antiviral proteins impair the membrane fusion event necessary for subsequent virion penetration. In terms of biological role, bypasses host T-cell signaling by inducing a transcriptional program nearly identical to that of anti-CD3 cell activation. Interaction with TCR-zeta chain up-regulates the Fas ligand (FasL). Increasing surface FasL molecules and decreasing surface MHC-I molecules on infected CD4(+) cells send attacking cytotoxic CD8+ T-lymphocytes into apoptosis. Its function is as follows. Plays a role in optimizing the host cell environment for viral replication without causing cell death by apoptosis. Protects the infected cells from apoptosis in order to keep them alive until the next virus generation is ready to strike. Inhibits the Fas and TNFR-mediated death signals by blocking MAP3K5/ASK1. Decreases the half-life of TP53, protecting the infected cell against p53-mediated apoptosis. Inhibits the apoptotic signals regulated by the Bcl-2 family proteins through the formation of a Nef/PI3-kinase/PAK2 complex that leads to activation of PAK2 and induces phosphorylation of host BAD. Functionally, extracellular Nef protein targets CD4(+) T-lymphocytes for apoptosis by interacting with CXCR4 surface receptors. This Homo sapiens (Human) protein is Protein Nef.